We begin with the raw amino-acid sequence, 425 residues long: Histone-binding protein RBBP4 (425 aa).

N-acetylalanine is present on Ala-2. Lys-4 is modified (N6-acetyllysine; alternate). Lys-4 is covalently cross-linked (Glycyl lysine isopeptide (Lys-Gly) (interchain with G-Cter in SUMO2); alternate). Lys-4 is covalently cross-linked (Glycyl lysine isopeptide (Lys-Gly) (interchain with G-Cter in ubiquitin); alternate). WD repeat units lie at residues 32–125 (YDLV…NHEG), 126–175 (EVNR…RLRG), 176–223 (HQKE…KTIF), 225–270 (GHTA…HSVD), 271–314 (AHTA…HSFE), 315–371 (SHKD…FIHG), and 372–404 (GHTAKISDFSWNPNEPWVICSVSEDNIMQVWQM). Residue Ser-110 is modified to Phosphoserine. Residue Lys-160 is modified to N6-acetyllysine; alternate. A Glycyl lysine isopeptide (Lys-Gly) (interchain with G-Cter in SUMO2); alternate cross-link involves residue Lys-160. At Ser-355 the chain carries Phosphoserine.

This sequence belongs to the WD repeat RBAP46/RBAP48/MSI1 family. In terms of assembly, binds directly to helix 1 of the histone fold of histone H4, a region that is not accessible when H4 is in chromatin. Subunit of the chromatin assembly factor 1 (CAF-1) complex, which is composed of RBBP4, CHAF1B and CHAF1A. Subunit of the core histone deacetylase (HDAC) complex, which is composed of HDAC1, HDAC2, RBBP4 and RBBP7. The core HDAC complex associates with SIN3A, ARID4B/SAP180, SAP18, SAP30, SAP130, SUDS3/SAP45 and possibly ARID4A/RBP1 and ING1 to form the SIN3 HDAC complex. Component of the nucleosome remodeling and deacetylase (NuRD) repressor complex, composed of core proteins MTA1, MTA2, MTA3, RBBP4, RBBP7, HDAC1, HDAC2, MBD2, MBD3, and peripherally associated proteins CDK2AP1, CDK2AP2, GATAD2A, GATAD2B, CHD3, CHD4 and CHD5. The exact stoichiometry of the NuRD complex is unknown, and some subunits such as MBD2 and MBD3, GATAD2A and GATAD2B, and CHD3, CHD4 and CHD5 define mutually exclusive NuRD complexes. Interacts with ZNF512B; the interaction is direct and may play a role in repressing gene expression. The NuRD complex may also interact with MBD3L1 and MBD3L2. Component of the PRC2 complex, which consists of the core subunits EED, EZH1 or EZH2, SUZ12, and RBBP4, and various combinations of accessory subunits including AEBP2, JARID2, PHF19, MTF2 and EPOP. Forms a monomeric PRC2.2 (class 2) complex consisting of at least SUZ12, RBBP4, AEBP2 and JARID2. Forms a dimeric PRC2.1 (class 1, PRC-PCL) complex consisting of at least SUZ12, RBBP4, and PHF19; PHF19 stabilizes the dimeric structure which enhances PRC2 interaction with chromatin. Component of the NURF-1 ISWI chromatin remodeling complex (also called the nucleosome-remodeling factor (NURF) complex) at least composed of SMARCA1 (isoform 2), BPTF, RBBP4 and RBBP7. Within the complex interacts with isoform 2 of SMARCA1. Component of the BPFT-SMARCA1 complex at least composed of SMARCA1 (isoform 1), BPFT, RBBP4 and RBBP7; the complex is catalytically inactive and does not remodel chromatin. Within the complex interacts with isoform 1 of SMARCA1. Interacts with the ISWI chromatin remodeling complex component SMARCA5; the interaction is direct. Interacts with the viral protein-binding domain of the retinoblastoma protein (RB1). Component of the DREAM complex (also named LINC complex) at least composed of E2F4, E2F5, LIN9, LIN37, LIN52, LIN54, MYBL1, MYBL2, RBL1, RBL2, RBBP4, TFDP1 and TFDP2. The complex exists in quiescent cells where it represses cell cycle-dependent genes. It dissociates in S phase when LIN9, LIN37, LIN52 and LIN54 form a subcomplex that binds to MYBL2. Found in a complex composed of at least SINHCAF, SIN3A, HDAC1, SAP30, RBBP4, OGT and TET1. Interacts with ZNF827; the interaction is direct and recruits RBBP4 to telomeres. Interacts with MTA1; the interaction is direct and mutually exclusive with binding histone H4. Interacts with ARMC12 (via ARM domains). Interacts with BRCA1. Interacts with CDK2AP1. Interacts with CREBBP, and this interaction may be enhanced by the binding of phosphorylated CREB1 to CREBBP. Interacts with ERCC6. Interacts with HDAC7. Interacts with PHF6. Interacts with PWWP2B. Interacts with SPEN/MINT. Interacts with SUV39H1.

The protein localises to the nucleus. Its subcellular location is the chromosome. The protein resides in the telomere. Functionally, core histone-binding subunit that may target chromatin assembly factors, chromatin remodeling factors and histone deacetylases to their histone substrates in a manner that is regulated by nucleosomal DNA. Component of the chromatin assembly factor 1 (CAF-1) complex, which is required for chromatin assembly following DNA replication and DNA repair. Component of the core histone deacetylase (HDAC) complex, which promotes histone deacetylation and consequent transcriptional repression. Component of the nucleosome remodeling and histone deacetylase complex (the NuRD complex), which promotes transcriptional repression by histone deacetylation and nucleosome remodeling. Component of the PRC2 complex, which promotes repression of homeotic genes during development. Component of the NURF (nucleosome remodeling factor) complex. The chain is Histone-binding protein RBBP4 (RBBP4) from Pongo abelii (Sumatran orangutan).